A 1538-amino-acid chain; its full sequence is Arf-GAP with Rho-GAP domain, ANK repeat and PH domain-containing protein 3 (1538 aa).

The SAM domain occupies 4–68; the sequence is PQDLDIAVWL…LRLLRAGSAE (65 aa). 3 disordered regions span residues 72-97, 125-149, and 215-242; these read DSHL…PVPK, SRNS…SVPN, and ASDR…EDAG. Residues 82-97 are compositionally biased toward pro residues; sequence TPSPAPDAQPPKPVPK. Over residues 216-241 the composition is skewed to basic and acidic residues; sequence SDRRDGRGVCQERAEHRQDLETREDA. PH domains follow at residues 282–374 and 389–478; these read VPLL…SCLK and RPLR…EAVT. The Arf-GAP domain maps to 479-606; that stretch reads ETLSDYEVAE…LFRKPHPRHP (128 aa). 2 consecutive PH domains span residues 671-785 and 795-901; these read ATYR…FSPL and LLRM…AGGG. The 182-residue stretch at 903–1084 folds into the Rho-GAP domain; the sequence is TGLQEQQMSR…ELIDGYISVF (182 aa). In terms of domain architecture, Ras-associating spans 1113-1206; it reads GDLIMEVYIE…ASLLLRKVSM (94 aa). The region spanning 1219–1321 is the PH 5 domain; that stretch reads ESPRVGLLRC…WTTSILKAQH (103 aa). Thr1344 carries the post-translational modification Phosphothreonine. Tyr1399 and Tyr1404 each carry phosphotyrosine. Polar residues predominate over residues 1425–1439; sequence WSAKSDPSLTSQRSF. The segment at 1425-1538 is disordered; sequence WSAKSDPSLT…SNPPSSQPLT (114 aa). 2 positions are modified to phosphoserine: Ser1438 and Ser1474. Low complexity-rich tracts occupy residues 1476–1486 and 1494–1505; these read EEQLLQELNNL and ASCPESSSQPTS. Positions 1506–1529 are enriched in pro residues; it reads PQAPSPTSLPTPTPSLPTQPPCTS.

As to quaternary structure, interacts (via SAM domain) with INPPL1/SHIP2. In terms of processing, tyrosine phosphorylated at a low basal level. PDGF treatment stimulates phosphorylation. Tyrosine phosphorylation is increased in cells that are in the process of becoming attached to a substrate and that start spreading and flattening.

The protein resides in the cytoplasm. Its subcellular location is the cell membrane. It is found in the cytoskeleton. The protein localises to the cell projection. It localises to the lamellipodium. The protein resides in the ruffle. In terms of biological role, phosphatidylinositol 3,4,5-trisphosphate-dependent GTPase-activating protein that modulates actin cytoskeleton remodeling by regulating ARF and RHO family members. Is activated by phosphatidylinositol 3,4,5-trisphosphate (PtdIns(3,4,5)P3) binding. Can be activated by phosphatidylinositol 3,4-bisphosphate (PtdIns(3,4,5)P2) binding, albeit with lower efficiency. Acts preferentially on ARF5 and on RHOA. The sequence is that of Arf-GAP with Rho-GAP domain, ANK repeat and PH domain-containing protein 3 (Arap3) from Mus musculus (Mouse).